We begin with the raw amino-acid sequence, 482 residues long: MVESQKAMPQPKMGRIRRIHFVGIGGVGMCGIAEVLLNLGYEVSGSDLKASPVTERLESFGAEIFVGHRAENAATADVLVVSSAINPANPEVATALERRIPVVPRAEMLAELMRYRHGVAVAGTHGKTTTTSLLASVFAAGGLDPTFVIGGRLTAAGTNAQLGTSRYLIAEADESDASFLHLQPMVAVVTNIDADHMATYEGDFNKLKKTFVEFLHNLPFYGLAVMCLDDPVVREILPQVKRPTVTYGFSEEADIRAINVRQQGMQTHFTVLRRDREPLEVSVNMPGNHNVLNALATIAIATDEGITDEAIVQGLSGFQGVGRRFQVYGELPVEGGSVMLVDDYGHHPTEVAAVIKAVRGGWPSRRLVIVYQPHRYSRTRDLYDDFVQVLGDANVLLLMEVYPAGEEPIPGADSRQLCHSIRQRGKLDPIYIERGAELAPLVKPLLRAGDILLCQGAGDVGGLAPQLMKSPLFAGAKQEKSK.

123 to 129 (GTHGKTT) is a binding site for ATP.

Belongs to the MurCDEF family.

The protein resides in the cytoplasm. The catalysed reaction is UDP-N-acetyl-alpha-D-muramate + L-alanine + ATP = UDP-N-acetyl-alpha-D-muramoyl-L-alanine + ADP + phosphate + H(+). The protein operates within cell wall biogenesis; peptidoglycan biosynthesis. Cell wall formation. The polypeptide is UDP-N-acetylmuramate--L-alanine ligase (Pseudomonas putida (strain ATCC 47054 / DSM 6125 / CFBP 8728 / NCIMB 11950 / KT2440)).